Consider the following 497-residue polypeptide: Paired box protein Pax-2-A (497 aa).

The segment at residues 16-142 (GHGGVNQLGG…SSINRIIRTK (127 aa)) is a DNA-binding region (paired). The PAI subdomain stretch occupies residues 19–75 (GVNQLGGVFVNGRPLPDVVRQRIVELAHQGVRPCDISRQLRVSHGCVSKILGRYYET). The interval 94-142 (KVVDKIAEYKRQNPTMFAWEIRDRLLAEGICDNDTVPSVSSINRIIRTK) is RED subdomain. The tract at residues 143–224 (VQQPFHPTPD…GDSQSSVESL (82 aa)) is disordered. Residues 166-178 (VPSTASPPVSSAS) are compositionally biased toward low complexity.

In terms of tissue distribution, expression becomes spatially localized at mid-gastrula stages and is confined to the nervous system (midbrain, hindbrain, spinal cord), sensory organs (optic vesicle and stalk, otic vesicle), visceral arches, developing excretory system (pronephros, pronephric duct, rectal diverticulum, proctodaeum) and thyroid gland. Splicing does not appear to be tissue-specific and tissues displayed the same spectrum of splice variants.

The protein resides in the nucleus. Its function is as follows. Probable transcription factor. Involved in kidney development, acting synergistically with lhx1/lim-1 in pronephric morphogenesis during the tailbud stages. In Xenopus laevis (African clawed frog), this protein is Paired box protein Pax-2-A (pax2-a).